The following is an 80-amino-acid chain: DNA-binding protein S1FA2 (80 aa).

Residues 54-59 carry the Nuclear localization signal motif; the sequence is PPRKKK. Residues 55-70 show a composition bias toward basic residues; sequence PRKKKPVSKKKMKREK. Positions 55–80 are disordered; sequence PRKKKPVSKKKMKREKLKQGVSAPGE.

The protein belongs to the S1FA transcription factor family.

Its subcellular location is the nucleus. Functionally, DNA-binding protein that specifically recognizes a negative element (S1F) within the RPS1 promoter. This is DNA-binding protein S1FA2 (S1FA2) from Oryza sativa subsp. japonica (Rice).